The chain runs to 209 residues: ADP-ribose pyrophosphatase (209 aa).

Residues 28-29, 51-52, Arg-56, and Arg-79 contribute to the substrate site; these read FF and RE. Residues 55 to 193 form the Nudix hydrolase domain; sequence ERGHAAVLLP…KIDNAASVIA (139 aa). Ala-96 lines the Mg(2+) pocket. The short motif at 97 to 118 is the Nudix box element; that stretch reads GMIEEGESVEDVARREAIEEAG. Met-98 serves as a coordination point for substrate. Mg(2+) is bound by residues Glu-112 and Glu-116. Residues 133-135 and Glu-139 contribute to the substrate site; that span reads SPG. Glu-162 (proton acceptor) is an active-site residue. Glu-164 contacts Mg(2+).

It belongs to the Nudix hydrolase family. NudF subfamily. In terms of assembly, homodimer. The cofactor is Mg(2+).

The catalysed reaction is ADP-D-ribose + H2O = D-ribose 5-phosphate + AMP + 2 H(+). With respect to regulation, inhibited by phosphorylated compounds such as AMP, ADP, ATP, 3-phosphoglyceric acid and PPi. Not inhibited by orthophosphate. Activity is high in cells grown in low glucose concentrations and decreases dramatically as glucose concentration increases. Its function is as follows. Acts on ADP-mannose and ADP-glucose as well as ADP-ribose. Prevents glycogen biosynthesis. The reaction catalyzed by this enzyme is a limiting step of the gluconeogenic process. This chain is ADP-ribose pyrophosphatase (nudF), found in Escherichia coli O157:H7.